A 473-amino-acid chain; its full sequence is Venom prothrombin activator vestarin-D1 (473 aa).

An N-terminal signal peptide occupies residues 1 to 20 (MAPQLLLCLIQTFLWSLPEA). Positions 21 to 40 (ESNVFLKSNVANRFLQRTKR) are excised as a propeptide. The 46-residue stretch at 41 to 86 (ANSGFEEIYPANFERECVEERCSKEEAREVFEDDEKTEAFWTVYVD) folds into the Gla domain. 4-carboxyglutamate is present on residues Glu46, Glu47, Glu54, Glu56, Glu59, Glu60, Glu65, Glu66, Glu69, Glu72, and Glu75. Cys57 and Cys62 form a disulfide bridge. The EGF-like 1; calcium-binding domain occupies 86–122 (DGDQCLSNPCHYGGTCKDGIGSYTCTCLAGYEGKNCE). 10 cysteine pairs are disulfide-bonded: Cys90/Cys101, Cys95/Cys110, Cys112/Cys121, Cys129/Cys140, Cys136/Cys149, Cys151/Cys164, Cys172/Cys335, Cys235/Cys240, Cys383/Cys397, and Cys408/Cys436. O-linked (Hex...) serine glycosylation occurs at Ser92. Residues 129–164 (CRVDNGNCWHFCKPVQNDTQCSCAEGYRLGDNGFSC) form the EGF-like 2 domain. Residues 182-228 (REASLPDFQTDFSDDYDAIDENNLIETVQSQSATLLKKSDNPNPDIR) constitute a propeptide, activation peptide. The region spanning 229 to 460 (IVNGLDCKLG…FLPWIKTIMR (232 aa)) is the Peptidase S1 domain. His270 functions as the Charge relay system in the catalytic mechanism. The N-linked (GlcNAc...) asparagine glycan is linked to Asn273. The active-site Charge relay system is the Asp315. The Charge relay system role is filled by Ser412.

It belongs to the peptidase S1 family. Snake venom subfamily. As to quaternary structure, heterodimer of a light chain and a heavy chain; disulfide-linked. The vitamin K-dependent, enzymatic carboxylation of some glutamate residues allows the modified protein to bind calcium. In terms of tissue distribution, expressed by the venom gland.

The protein localises to the secreted. It catalyses the reaction Selective cleavage of Arg-|-Thr and then Arg-|-Ile bonds in prothrombin to form thrombin.. In terms of biological role, snake prothrombin activator that attacks the hemostatic system of prey. This protein is functionally similar to blood coagulation factor Xa. The sequence is that of Venom prothrombin activator vestarin-D1 from Demansia vestigiata (Lesser black whip snake).